A 363-amino-acid polypeptide reads, in one-letter code: Dihydroorotate dehydrogenase (quinone) (363 aa).

Residues 70 to 74 (AGFDK) and threonine 94 contribute to the FMN site. Lysine 74 serves as a coordination point for substrate. 119–123 (NRMGF) contacts substrate. FMN contacts are provided by asparagine 147 and asparagine 180. Asparagine 180 contacts substrate. Serine 183 acts as the Nucleophile in catalysis. Asparagine 185 serves as a coordination point for substrate. FMN-binding residues include lysine 216 and threonine 244. 245–246 (NT) is a substrate binding site. FMN-binding positions include glycine 270, glycine 299, and 320 to 321 (YT).

This sequence belongs to the dihydroorotate dehydrogenase family. Type 2 subfamily. Monomer. It depends on FMN as a cofactor.

It localises to the cell membrane. It carries out the reaction (S)-dihydroorotate + a quinone = orotate + a quinol. Its pathway is pyrimidine metabolism; UMP biosynthesis via de novo pathway; orotate from (S)-dihydroorotate (quinone route): step 1/1. Catalyzes the conversion of dihydroorotate to orotate with quinone as electron acceptor. This is Dihydroorotate dehydrogenase (quinone) from Corynebacterium diphtheriae (strain ATCC 700971 / NCTC 13129 / Biotype gravis).